The primary structure comprises 138 residues: Large ribosomal subunit protein uL16 (138 aa).

Residues 1-15 (MLSPKKVKYRKKQRG) are compositionally biased toward basic residues. The segment at 1–21 (MLSPKKVKYRKKQRGRLSGEA) is disordered.

It belongs to the universal ribosomal protein uL16 family. Part of the 50S ribosomal subunit.

Functionally, binds 23S rRNA and is also seen to make contacts with the A and possibly P site tRNAs. This is Large ribosomal subunit protein uL16 from Borreliella burgdorferi (strain ATCC 35210 / DSM 4680 / CIP 102532 / B31) (Borrelia burgdorferi).